The sequence spans 76 residues: MAVEKFETALKKLEDVVNRLESGELSLDDSLKAFEEGVKMAAFCTKKLDEAEKKVEILLKKKDGSFAKEPFRLEDD.

Belongs to the XseB family. In terms of assembly, heterooligomer composed of large and small subunits.

It localises to the cytoplasm. It catalyses the reaction Exonucleolytic cleavage in either 5'- to 3'- or 3'- to 5'-direction to yield nucleoside 5'-phosphates.. Its function is as follows. Bidirectionally degrades single-stranded DNA into large acid-insoluble oligonucleotides, which are then degraded further into small acid-soluble oligonucleotides. In Geobacter metallireducens (strain ATCC 53774 / DSM 7210 / GS-15), this protein is Exodeoxyribonuclease 7 small subunit.